A 392-amino-acid polypeptide reads, in one-letter code: Stilbene synthase 5 (392 aa).

Residue 55-58 (KFNR) participates in substrate binding. Residue Cys164 is part of the active site. Residues Leu267 and 305-307 (GGP) contribute to the substrate site.

This sequence belongs to the thiolase-like superfamily. Chalcone/stilbene synthases family. Homodimer.

The protein resides in the cytoplasm. It catalyses the reaction 4-coumaroyl-CoA + 3 malonyl-CoA + 3 H(+) = trans-resveratrol + 4 CO2 + 4 CoA. It participates in phytoalexin biosynthesis; 3,4',5-trihydroxystilbene biosynthesis; 3,4',5-trihydroxystilbene from trans-4-coumarate: step 2/2. Mediates resistance to pathogens which are sensitive to stilbenes. This is Stilbene synthase 5 from Vitis vinifera (Grape).